The primary structure comprises 474 residues: Adenosylhomocysteinase (474 aa).

Thr61, Asp136, and Glu196 together coordinate substrate. 197–199 (TTT) contributes to the NAD(+) binding site. Substrate is bound by residues Lys226 and Asp230. Residues Asn231, 260–265 (GYGDVG), Glu283, Asn318, 339–341 (IGH), and Asn384 each bind NAD(+).

Belongs to the adenosylhomocysteinase family. The cofactor is NAD(+).

It is found in the cytoplasm. It catalyses the reaction S-adenosyl-L-homocysteine + H2O = L-homocysteine + adenosine. It participates in amino-acid biosynthesis; L-homocysteine biosynthesis; L-homocysteine from S-adenosyl-L-homocysteine: step 1/1. In terms of biological role, may play a key role in the regulation of the intracellular concentration of adenosylhomocysteine. The chain is Adenosylhomocysteinase from Ralstonia pickettii (strain 12J).